Reading from the N-terminus, the 238-residue chain is DNA repair protein RAD59 (238 aa).

It belongs to the RAD52 family. In terms of assembly, interacts with RAD51 and RAD52.

The protein resides in the nucleus. Functionally, involved in the repair of double-strand breaks in DNA during vegetative growth via recombination and single-strand annealing. Anneals complementary single-stranded DNA. The sequence is that of DNA repair protein RAD59 (RAD59) from Saccharomyces cerevisiae (strain ATCC 204508 / S288c) (Baker's yeast).